The sequence spans 349 residues: Acyl-CoA:acyl-CoA alkyltransferase (349 aa).

The active-site Proton acceptor is the Glu-97. Cys-123 serves as the catalytic Acyl-thioester intermediate.

It belongs to the thiolase-like superfamily. OleA family.

It carries out the reaction a 1,2-saturated acyl-CoA + an acyl-CoA + H2O = an (R)-2-alkyl-3-oxoalkanoate + 2 CoA + H(+). Functionally, involved in olefin biosynthesis. Catalyzes a non-decarboxylative head-to-head Claisen condensation of two acyl-CoA molecules, generating an (R)-2-alkyl-3-oxoalkanoate. The S.oneidensis oleABCD genes produce 3,6,9,12,15,19,22,25,28-hentriacontanonaene, which may aid the cells in adapting to a sudden drop in temperature. This is Acyl-CoA:acyl-CoA alkyltransferase from Shewanella oneidensis (strain ATCC 700550 / JCM 31522 / CIP 106686 / LMG 19005 / NCIMB 14063 / MR-1).